Here is a 365-residue protein sequence, read N- to C-terminus: Mannitol dehydrogenase (365 aa).

7 residues coordinate Zn(2+): C50, H72, C103, C106, C109, C117, and C166.

It belongs to the zinc-containing alcohol dehydrogenase family. Zn(2+) serves as cofactor.

The protein resides in the cytoplasm. It carries out the reaction D-mannitol + NAD(+) = D-mannose + NADH + H(+). Functionally, oxidizes mannitol to mannose. Provides the initial step by which translocated mannitol is committed to central metabolism and, by regulating mannitol pool size, is important in regulating salt tolerance at the cellular level. This Apium graveolens (Celery) protein is Mannitol dehydrogenase (MTD).